We begin with the raw amino-acid sequence, 420 residues long: Bone morphogenetic protein 2 (420 aa).

Residues 1–23 (MVAVVRSLMVLLLAQVLLEGATG) form the signal peptide. The propeptide occupies 24–303 (LIPEVGRRRY…DSVLHTREKR (280 aa)). 5 N-linked (GlcNAc...) asparagine glycosylation sites follow: asparagine 138, asparagine 167, asparagine 168, asparagine 172, and asparagine 362. 3 disulfide bridges follow: cysteine 320–cysteine 385, cysteine 349–cysteine 417, and cysteine 353–cysteine 419.

Belongs to the TGF-beta family. In terms of assembly, homodimer; disulfide-linked.

It localises to the secreted. In terms of biological role, induces cartilage and bone formation. In Tetraodon nigroviridis (Spotted green pufferfish), this protein is Bone morphogenetic protein 2 (bmp2).